The primary structure comprises 230 residues: Cytochrome c oxidase subunit 2 (230 aa).

The Mitochondrial intermembrane portion of the chain corresponds to Met-1 to Met-14. A helical transmembrane segment spans residues Pro-15–Met-45. At Val-46–Gln-59 the chain is on the mitochondrial matrix side. The chain crosses the membrane as a helical span at residues Glu-60–Met-87. The Mitochondrial intermembrane segment spans residues Asp-88 to Ala-230. Residues His-161, Cys-196, Glu-198, Cys-200, His-204, and Met-207 each contribute to the Cu cation site. Position 198 (Glu-198) interacts with Mg(2+).

This sequence belongs to the cytochrome c oxidase subunit 2 family. In terms of assembly, component of the cytochrome c oxidase (complex IV, CIV), a multisubunit enzyme composed of 14 subunits. The complex is composed of a catalytic core of 3 subunits MT-CO1, MT-CO2 and MT-CO3, encoded in the mitochondrial DNA, and 11 supernumerary subunits COX4I, COX5A, COX5B, COX6A, COX6B, COX6C, COX7A, COX7B, COX7C, COX8 and NDUFA4, which are encoded in the nuclear genome. The complex exists as a monomer or a dimer and forms supercomplexes (SCs) in the inner mitochondrial membrane with NADH-ubiquinone oxidoreductase (complex I, CI) and ubiquinol-cytochrome c oxidoreductase (cytochrome b-c1 complex, complex III, CIII), resulting in different assemblies (supercomplex SCI(1)III(2)IV(1) and megacomplex MCI(2)III(2)IV(2)). Found in a complex with TMEM177, COA6, COX18, COX20, SCO1 and SCO2. Interacts with TMEM177 in a COX20-dependent manner. Interacts with COX20. Interacts with COX16. It depends on Cu cation as a cofactor.

The protein localises to the mitochondrion inner membrane. It carries out the reaction 4 Fe(II)-[cytochrome c] + O2 + 8 H(+)(in) = 4 Fe(III)-[cytochrome c] + 2 H2O + 4 H(+)(out). Functionally, component of the cytochrome c oxidase, the last enzyme in the mitochondrial electron transport chain which drives oxidative phosphorylation. The respiratory chain contains 3 multisubunit complexes succinate dehydrogenase (complex II, CII), ubiquinol-cytochrome c oxidoreductase (cytochrome b-c1 complex, complex III, CIII) and cytochrome c oxidase (complex IV, CIV), that cooperate to transfer electrons derived from NADH and succinate to molecular oxygen, creating an electrochemical gradient over the inner membrane that drives transmembrane transport and the ATP synthase. Cytochrome c oxidase is the component of the respiratory chain that catalyzes the reduction of oxygen to water. Electrons originating from reduced cytochrome c in the intermembrane space (IMS) are transferred via the dinuclear copper A center (CU(A)) of subunit 2 and heme A of subunit 1 to the active site in subunit 1, a binuclear center (BNC) formed by heme A3 and copper B (CU(B)). The BNC reduces molecular oxygen to 2 water molecules using 4 electrons from cytochrome c in the IMS and 4 protons from the mitochondrial matrix. In Cyprinus carpio (Common carp), this protein is Cytochrome c oxidase subunit 2 (mt-co2).